A 414-amino-acid chain; its full sequence is Multifunctional CCA protein (414 aa).

The ATP site is built by glycine 8 and arginine 11. 2 residues coordinate CTP: glycine 8 and arginine 11. Residues glutamate 21 and aspartate 23 each coordinate Mg(2+). ATP contacts are provided by arginine 91, arginine 137, and arginine 140. CTP-binding residues include arginine 91, arginine 137, and arginine 140. The HD domain maps to threonine 228–tryptophan 329.

Belongs to the tRNA nucleotidyltransferase/poly(A) polymerase family. Bacterial CCA-adding enzyme type 1 subfamily. In terms of assembly, monomer. Can also form homodimers and oligomers. Mg(2+) is required as a cofactor. The cofactor is Ni(2+).

The enzyme catalyses a tRNA precursor + 2 CTP + ATP = a tRNA with a 3' CCA end + 3 diphosphate. It carries out the reaction a tRNA with a 3' CCA end + 2 CTP + ATP = a tRNA with a 3' CCACCA end + 3 diphosphate. In terms of biological role, catalyzes the addition and repair of the essential 3'-terminal CCA sequence in tRNAs without using a nucleic acid template. Adds these three nucleotides in the order of C, C, and A to the tRNA nucleotide-73, using CTP and ATP as substrates and producing inorganic pyrophosphate. tRNA 3'-terminal CCA addition is required both for tRNA processing and repair. Also involved in tRNA surveillance by mediating tandem CCA addition to generate a CCACCA at the 3' terminus of unstable tRNAs. While stable tRNAs receive only 3'-terminal CCA, unstable tRNAs are marked with CCACCA and rapidly degraded. The polypeptide is Multifunctional CCA protein (Pectobacterium carotovorum subsp. carotovorum (strain PC1)).